Consider the following 274-residue polypeptide: tRNA-cytidine(32) 2-sulfurtransferase (274 aa).

The PP-loop motif motif lies at 40–45; that stretch reads SGGKDS. [4Fe-4S] cluster-binding residues include Cys-115, Cys-118, and Cys-206.

Belongs to the TtcA family. Homodimer. Mg(2+) serves as cofactor. [4Fe-4S] cluster is required as a cofactor.

The protein localises to the cytoplasm. The enzyme catalyses cytidine(32) in tRNA + S-sulfanyl-L-cysteinyl-[cysteine desulfurase] + AH2 + ATP = 2-thiocytidine(32) in tRNA + L-cysteinyl-[cysteine desulfurase] + A + AMP + diphosphate + H(+). The protein operates within tRNA modification. Functionally, catalyzes the ATP-dependent 2-thiolation of cytidine in position 32 of tRNA, to form 2-thiocytidine (s(2)C32). The sulfur atoms are provided by the cysteine/cysteine desulfurase (IscS) system. In Pseudomonas aeruginosa (strain LESB58), this protein is tRNA-cytidine(32) 2-sulfurtransferase.